The primary structure comprises 150 residues: MKGIAIFLVFIFYWTTSTLSSFWQFQRMVKHVTGRSAFFSYYGYGCYCGLGGKGLPVDATDRCCWAHDCCYHKLKEYGCQPILNAYQFTIVNGTVTCGCTVASSCPCGQKACECDKQSVYCFKENLATYEKAFKQLFPTRPQCGRDKLQC.

The first 20 residues, Met1–Ser20, serve as a signal peptide directing secretion. 8 disulfides stabilise this stretch: Cys46-Cys143, Cys48-Cys64, Cys63-Cys121, Cys69-Cys150, Cys70-Cys114, Cys79-Cys107, Cys97-Cys112, and Cys99-Cys105. Positions 47, 49, and 51 each coordinate Ca(2+). His67 is a catalytic residue. Asp68 provides a ligand contact to Ca(2+). Asn92 carries an N-linked (GlcNAc...) asparagine glycan. The active site involves Asp115.

This sequence belongs to the phospholipase A2 family. Requires Ca(2+) as cofactor. Testis specific.

It is found in the secreted. It catalyses the reaction a 1,2-diacyl-sn-glycero-3-phosphocholine + H2O = a 1-acyl-sn-glycero-3-phosphocholine + a fatty acid + H(+). PA2 catalyzes the calcium-dependent hydrolysis of the 2-acyl groups in 3-sn-phosphoglycerides. Testis PA2 may be important in the production of prostaglandins, by the release of arachidonic acid, which in turn are necessary for the contractions of the seminiferous tubules and the testicular capsule; they also seem to decrease sperm transit time through the male reproductive tract. In Mus musculus (Mouse), this protein is Group IIC secretory phospholipase A2 (Pla2g2c).